The following is a 133-amino-acid chain: Protein PROTON GRADIENT REGULATION 5, chloroplastic (133 aa).

Residues 1 to 60 constitute a chloroplast transit peptide; sequence MAAASISAIGCNQTLIGTSFYGGWGSSISGEDYQTMLSKTVAPPQQARVSRKAIRAVPMM.

Belongs to the PGR5 family. In terms of assembly, interacts with PGRL1A and PGRL1B. Disulfide bonds; Cys-11 and Cys-105 are probably involved in the formation of disulfide bridges with 'Cys-300' and 'Cys-303' of PGRL1A. 'Cys-272' and 'Cys-275' of PGRL1A may also be used to form the disulfide bridges, but in this case the cyclic electron flow is lost.

The protein resides in the plastid. It localises to the chloroplast thylakoid membrane. In terms of biological role, critical for growth under fluctuating-light conditions. Involved in the regulation of the cyclic electron flow (CEF) around Photosystem I. Essential for the reduction of PGRL1A by ferredoxin and for photoprotection. Contributes to maximize photosynthesis efficiency after a long dark adaptation via the regulation of non-photochemical quenching (NPQ); acts independently from DLDG1. Promotes the induction of steady-state proton motive force (pmf) and energy-dependent quenching (qE). The chain is Protein PROTON GRADIENT REGULATION 5, chloroplastic from Arabidopsis thaliana (Mouse-ear cress).